We begin with the raw amino-acid sequence, 236 residues long: 2-C-methyl-D-erythritol 4-phosphate cytidylyltransferase (236 aa).

It belongs to the IspD/TarI cytidylyltransferase family. IspD subfamily. In terms of assembly, homodimer.

The enzyme catalyses 2-C-methyl-D-erythritol 4-phosphate + CTP + H(+) = 4-CDP-2-C-methyl-D-erythritol + diphosphate. The protein operates within isoprenoid biosynthesis; isopentenyl diphosphate biosynthesis via DXP pathway; isopentenyl diphosphate from 1-deoxy-D-xylulose 5-phosphate: step 2/6. Its function is as follows. Catalyzes the formation of 4-diphosphocytidyl-2-C-methyl-D-erythritol from CTP and 2-C-methyl-D-erythritol 4-phosphate (MEP). In Escherichia fergusonii (strain ATCC 35469 / DSM 13698 / CCUG 18766 / IAM 14443 / JCM 21226 / LMG 7866 / NBRC 102419 / NCTC 12128 / CDC 0568-73), this protein is 2-C-methyl-D-erythritol 4-phosphate cytidylyltransferase.